The primary structure comprises 532 residues: Autoinducer-2 kinase (532 aa).

The protein belongs to the FGGY kinase family.

The protein resides in the cytoplasm. The catalysed reaction is (S)-4,5-dihydroxypentane-2,3-dione + ATP = (2S)-2-hydroxy-3,4-dioxopentyl phosphate + ADP + H(+). Catalyzes the phosphorylation of autoinducer-2 (AI-2) to phospho-AI-2, which subsequently inactivates the transcriptional regulator LsrR and leads to the transcription of the lsr operon. Phosphorylates the ring-open form of (S)-4,5-dihydroxypentane-2,3-dione (DPD), which is the precursor to all AI-2 signaling molecules, at the C5 position. The polypeptide is Autoinducer-2 kinase (Klebsiella pneumoniae subsp. pneumoniae (strain ATCC 700721 / MGH 78578)).